Reading from the N-terminus, the 365-residue chain is Phosphate acyltransferase (365 aa).

This sequence belongs to the PlsX family. Homodimer. Probably interacts with PlsY.

The protein localises to the cytoplasm. The enzyme catalyses a fatty acyl-[ACP] + phosphate = an acyl phosphate + holo-[ACP]. It functions in the pathway lipid metabolism; phospholipid metabolism. Its function is as follows. Catalyzes the reversible formation of acyl-phosphate (acyl-PO(4)) from acyl-[acyl-carrier-protein] (acyl-ACP). This enzyme utilizes acyl-ACP as fatty acyl donor, but not acyl-CoA. The polypeptide is Phosphate acyltransferase (Picosynechococcus sp. (strain ATCC 27264 / PCC 7002 / PR-6) (Agmenellum quadruplicatum)).